A 205-amino-acid chain; its full sequence is Holliday junction branch migration complex subunit RuvA (205 aa).

The interval 1 to 64 is domain I; that stretch reads MIGKLKGVVD…EDMIRLYGFR (64 aa). The interval 65-143 is domain II; the sequence is SDAEREWFRL…AFAPVDPALI (79 aa). Residues 144-152 form a flexible linker region; the sequence is RLAGAVEER. The tract at residues 153-205 is domain III; the sequence is TAPQPVADAISALVNLGYPQIQASAAVAAALQGAGEGAEAKTLIRLGLRELAR.

It belongs to the RuvA family. Homotetramer. Forms an RuvA(8)-RuvB(12)-Holliday junction (HJ) complex. HJ DNA is sandwiched between 2 RuvA tetramers; dsDNA enters through RuvA and exits via RuvB. An RuvB hexamer assembles on each DNA strand where it exits the tetramer. Each RuvB hexamer is contacted by two RuvA subunits (via domain III) on 2 adjacent RuvB subunits; this complex drives branch migration. In the full resolvosome a probable DNA-RuvA(4)-RuvB(12)-RuvC(2) complex forms which resolves the HJ.

It is found in the cytoplasm. The RuvA-RuvB-RuvC complex processes Holliday junction (HJ) DNA during genetic recombination and DNA repair, while the RuvA-RuvB complex plays an important role in the rescue of blocked DNA replication forks via replication fork reversal (RFR). RuvA specifically binds to HJ cruciform DNA, conferring on it an open structure. The RuvB hexamer acts as an ATP-dependent pump, pulling dsDNA into and through the RuvAB complex. HJ branch migration allows RuvC to scan DNA until it finds its consensus sequence, where it cleaves and resolves the cruciform DNA. The protein is Holliday junction branch migration complex subunit RuvA of Methylobacterium nodulans (strain LMG 21967 / CNCM I-2342 / ORS 2060).